A 475-amino-acid chain; its full sequence is Ataxin-10 (475 aa).

Arg10 is modified (omega-N-methylarginine). 2 positions are modified to phosphoserine: Ser12 and Ser77. Thr82 carries the post-translational modification Phosphothreonine. The residue at position 430 (Ser430) is a Phosphoserine.

The protein belongs to the ataxin-10 family. In terms of assembly, homooligomer. Interacts with GNB2. Interacts with IQCB1. Interacts with OGT. Polyubiquitinated. Post-translationally, phosphorylation at Ser-12 by AURKB promotes the association of ATXN10 with PLK1. Phosphorylation at Ser-77 and Thr-82 by PLK1 may play a role in the regulation of cytokinesis and may stimulate the proteasome-mediated degradation of ATXN10.

It localises to the cytoplasm. Its subcellular location is the perinuclear region. It is found in the midbody. The protein resides in the cytoskeleton. The protein localises to the cilium basal body. It localises to the microtubule organizing center. Its subcellular location is the centrosome. It is found in the centriole. Functionally, may play a role in the regulation of cytokinesis. May play a role in signaling by stimulating protein glycosylation. Induces neuritogenesis by activating the Ras-MAP kinase pathway and is necessary for the survival of cerebellar neurons. Does not appear to play a major role in ciliogenesis. In Macaca fascicularis (Crab-eating macaque), this protein is Ataxin-10 (ATXN10).